Consider the following 520-residue polypeptide: Nucleolar protein 12 (520 aa).

Disordered regions lie at residues 1-29 and 41-185; these read MGKK…NVSV and AGPV…DDDE. Residues 78–95 show a composition bias toward acidic residues; that stretch reads ASEDQFMEDAPESPDAAE. The span at 120-132 shows a compositional bias: basic and acidic residues; that stretch reads SYMRRLAKEEQKE. Positions 144–168 are enriched in acidic residues; it reads LEEESEDGEKESPQSEDGESEDEGA. RRM domains lie at 191-303 and 311-421; these read RTVF…NVAH and RCVF…RAKK. The segment at 472-520 is disordered; that stretch reads EGNRATADGSSRIRVRTKSRGSKAKKDSRSKKRAAAYKAAGGKKAKIGK. Basic residues predominate over residues 484–520; it reads IRVRTKSRGSKAKKDSRSKKRAAAYKAAGGKKAKIGK.

The protein belongs to the RRM RBM34 family.

Its subcellular location is the nucleus. It localises to the nucleolus. In terms of biological role, involved in pre-25S rRNA processing. The chain is Nucleolar protein 12 (nop12) from Emericella nidulans (strain FGSC A4 / ATCC 38163 / CBS 112.46 / NRRL 194 / M139) (Aspergillus nidulans).